Here is a 338-residue protein sequence, read N- to C-terminus: Nodulation outer protein L (338 aa).

The span at 1-14 (MDINSTSPLNASPQ) shows a compositional bias: polar residues. Disordered regions lie at residues 1–48 (MDIN…LPQV), 85–158 (TRER…DLET), 187–209 (SPAP…PHAR), and 230–259 (PQAG…SSAG). The segment covering 85–97 (TRERSPHPSEQRP) has biased composition (basic and acidic residues). The span at 126-138 (VGPSRSGPSQAGL) shows a compositional bias: polar residues. A compositionally biased stretch (polar residues) spans 242–258 (SGPSQARPSHAWPSSSA).

The protein resides in the secreted. In terms of biological role, putative symbiotic effector that modulates nodulation in legumes. When delivered into the plant cell, modulates the activity of signal transduction pathways that culminate in activation of PR proteins. The protein is Nodulation outer protein L (nopL) of Sinorhizobium fredii (strain NBRC 101917 / NGR234).